The sequence spans 238 residues: Ribonuclease HII (238 aa).

An RNase H type-2 domain is found at 12-197 (GIVAGVDEAG…VLELLTDDLL (186 aa)). A divalent metal cation is bound by residues aspartate 18, glutamate 19, and aspartate 107.

Belongs to the RNase HII family. The cofactor is Mn(2+). Mg(2+) is required as a cofactor.

The protein localises to the cytoplasm. It carries out the reaction Endonucleolytic cleavage to 5'-phosphomonoester.. In terms of biological role, endonuclease that specifically degrades the RNA of RNA-DNA hybrids. This is Ribonuclease HII from Thermotoga petrophila (strain ATCC BAA-488 / DSM 13995 / JCM 10881 / RKU-1).